A 657-amino-acid chain; its full sequence is Glycogen debranching enzyme (657 aa).

Asp336 (nucleophile) is an active-site residue. Glu371 serves as the catalytic Proton donor. A disordered region spans residues 460–479 (ANGEENRDGTNNNHSFNHGI).

Belongs to the glycosyl hydrolase 13 family.

It catalyses the reaction Hydrolysis of (1-&gt;6)-alpha-D-glucosidic linkages to branches with degrees of polymerization of three or four glucose residues in limit dextrin.. It functions in the pathway glycan degradation; glycogen degradation. Its function is as follows. Removes maltotriose and maltotetraose chains that are attached by 1,6-alpha-linkage to the limit dextrin main chain, generating a debranched limit dextrin. In Enterobacter sp. (strain 638), this protein is Glycogen debranching enzyme.